Consider the following 61-residue polypeptide: UPF0434 protein Bfl377 (61 aa).

The protein belongs to the UPF0434 family.

The chain is UPF0434 protein Bfl377 from Blochmanniella floridana.